The following is a 204-amino-acid chain: Putative t-SNARE coiled-coil homology domain-containing protein L657 (204 aa).

2 consecutive t-SNARE coiled-coil homology domains span residues 9-71 (SDYY…MDHV) and 140-202 (DNSR…IKHT). Positions 159-181 (VLEKQANDISNILDEQNNTLEII) form a coiled coil.

The sequence is that of Putative t-SNARE coiled-coil homology domain-containing protein L657 from Acanthamoeba polyphaga (Amoeba).